Reading from the N-terminus, the 83-residue chain is Cytochrome c oxidase subunit 12, mitochondrial (83 aa).

A CHCH domain is found at 24-67 (TKHCWQSYVDYHKCVNMKGEDFAPCKVFWKTYNALCPLDWIEKW). Positions 27-37 (CWQSYVDYHKC) match the Cx9C motif motif. 2 disulfides stabilise this stretch: Cys27–Cys59 and Cys37–Cys48. Positions 48 to 59 (CKVFWKTYNALC) match the Cx10C motif motif. The residue at position 82 (Ser82) is a Phosphoserine.

This sequence belongs to the cytochrome c oxidase subunit 6B family. In terms of assembly, component of the cytochrome c oxidase (complex IV, CIV), a multisubunit enzyme composed of 12 subunits. The complex is composed of a catalytic core of 3 subunits COX1, COX2 and COX3, encoded in the mitochondrial DNA, and 9 supernumerary subunits COX4, COX5A (or COX5B), COX6, COX7, COX8, COX9, COX12, COX13 and COX26, which are encoded in the nuclear genome. The complex exists as a monomer or a dimer and forms supercomplexes (SCs) in the inner mitochondrial membrane with a dimer of ubiquinol-cytochrome c oxidoreductase (cytochrome b-c1 complex, complex III, CIII), resulting in 2 different assemblies (supercomplexes III(2)IV and III(2)IV(2)).

It is found in the mitochondrion inner membrane. It functions in the pathway energy metabolism; oxidative phosphorylation. Component of the cytochrome c oxidase, the last enzyme in the mitochondrial electron transport chain which drives oxidative phosphorylation. The respiratory chain contains 3 multisubunit complexes succinate dehydrogenase (complex II, CII), ubiquinol-cytochrome c oxidoreductase (cytochrome b-c1 complex, complex III, CIII) and cytochrome c oxidase (complex IV, CIV), that cooperate to transfer electrons derived from NADH and succinate to molecular oxygen, creating an electrochemical gradient over the inner membrane that drives transmembrane transport and the ATP synthase. Cytochrome c oxidase is the component of the respiratory chain that catalyzes the reduction of oxygen to water. Electrons originating from reduced cytochrome c in the intermembrane space (IMS) are transferred via the dinuclear copper A center (CU(A)) of COX2 and heme A of COX1 to the active site in COX1, a binuclear center (BNC) formed by heme A3 and copper B (CU(B)). The BNC reduces molecular oxygen to 2 water molecules unsing 4 electrons from cytochrome c in the IMS and 4 protons from the mitochondrial matrix. The sequence is that of Cytochrome c oxidase subunit 12, mitochondrial (COX12) from Saccharomyces cerevisiae (strain ATCC 204508 / S288c) (Baker's yeast).